The chain runs to 333 residues: Forkhead box protein unc-130 (333 aa).

Positions 1 to 126 are disordered; sequence MLFSMESILS…MSGHRKSSHA (126 aa). Positions 14–24 are enriched in basic and acidic residues; that stretch reads PKLEPPPKLEP. Positions 37–50 are enriched in polar residues; that stretch reads RSNTRLSEPSTSAS. Residues 52 to 62 are compositionally biased toward basic and acidic residues; that stretch reads LEHDLKFGESR. Over residues 98–110 the composition is skewed to acidic residues; the sequence is SSDDAKDDDDDDD. The segment at residues 127–221 is a DNA-binding region (fork-head); sequence KPPYSYIALI…DNGSFLRRRK (95 aa). Residues 304–333 form a disordered region; it reads APVSSGQKRTSSSSSPNENGSSAVSDKLSA. The span at 307–333 shows a compositional bias: low complexity; that stretch reads SSGQKRTSSSSSPNENGSSAVSDKLSA.

In terms of tissue distribution, expressed in ventral body wall muscle. Expressed in the structural cells and two neurons of each ray in the male tail.

The protein resides in the nucleus. In terms of biological role, probable transcription factor. Binds to DNA sequence motif 5'-CTGTTTCA-3'. Required for the migration of distal tip cells (DTC) and axonal growth-cones along the dorsal-ventral axis of the body wall, acting by cell autonomous repression of unc-129/TGF-beta expression in ventral body muscle during embyogenesis. Binds to the promoter region of the unc-129 gene. Plays a role in dorsal-ventral patterning and fate specification of the postembryonic mesoderm. Involved in male tail morphogenesis and in embryogenesis. Plays a role in the development of sensory neurons and is required to repress AWA fate and promote ASG fate in the ASG chemosensory neurons. Regulates expression of a class of small RNAs, known as 21U-RNAs. In Caenorhabditis elegans, this protein is Forkhead box protein unc-130.